Consider the following 474-residue polypeptide: Proline--tRNA ligase (474 aa).

The protein belongs to the class-II aminoacyl-tRNA synthetase family. ProS type 3 subfamily. In terms of assembly, homodimer.

The protein resides in the cytoplasm. The catalysed reaction is tRNA(Pro) + L-proline + ATP = L-prolyl-tRNA(Pro) + AMP + diphosphate. In terms of biological role, catalyzes the attachment of proline to tRNA(Pro) in a two-step reaction: proline is first activated by ATP to form Pro-AMP and then transferred to the acceptor end of tRNA(Pro). This chain is Proline--tRNA ligase, found in Onion yellows phytoplasma (strain OY-M).